Consider the following 393-residue polypeptide: MTVPATRKDLMIVNMGPHHPSMHGVLRLIVTLDGEDVIDCEPVLGYLHRGMEKIAENRTIIQYLPYVTRWDYLATMFTEAITVNAPEQLGNIQVPKRASYIRAIMLELSRIASHLLWLGPFMADIGAQTPFFYIFRERELIYDLFEAATGMRMMHNYFRIGGVAADLPHGWIDKCLDFCDYFLTGIAEYQKLITRNPIFLERVEGVGIIGGEEAINWGLSGPMLRASGIQWDLRKVDHYGCYDEFDWEVQWQKEGDSLARYLVRISEMTESVKIIQQALEGIPGGPYENLEVRRFDRARDSEWNDFEYRFISKKPSPTFELSKQELYVRVEAPKGELGIFLIGDQSVFPWRWKIRPPGFINLQILPQLVKRMKLADIMTILGSIDIIMGEVDR.

This sequence belongs to the complex I 49 kDa subunit family. NDH is composed of at least 16 different subunits, 5 of which are encoded in the nucleus.

The protein localises to the plastid. Its subcellular location is the chloroplast thylakoid membrane. It catalyses the reaction a plastoquinone + NADH + (n+1) H(+)(in) = a plastoquinol + NAD(+) + n H(+)(out). It carries out the reaction a plastoquinone + NADPH + (n+1) H(+)(in) = a plastoquinol + NADP(+) + n H(+)(out). Its function is as follows. NDH shuttles electrons from NAD(P)H:plastoquinone, via FMN and iron-sulfur (Fe-S) centers, to quinones in the photosynthetic chain and possibly in a chloroplast respiratory chain. The immediate electron acceptor for the enzyme in this species is believed to be plastoquinone. Couples the redox reaction to proton translocation, and thus conserves the redox energy in a proton gradient. This is NAD(P)H-quinone oxidoreductase subunit H, chloroplastic from Platanus occidentalis (Sycamore).